We begin with the raw amino-acid sequence, 385 residues long: 1-deoxy-D-xylulose 5-phosphate reductoisomerase (385 aa).

NADPH is bound by residues Thr-11, Gly-12, Ser-13, Ile-14, Asn-39, and Asn-123. Lys-124 serves as a coordination point for 1-deoxy-D-xylulose 5-phosphate. Glu-125 contributes to the NADPH binding site. Mn(2+) is bound at residue Asp-149. Positions 150, 151, 174, and 197 each coordinate 1-deoxy-D-xylulose 5-phosphate. A Mn(2+)-binding site is contributed by Glu-151. Gly-203 is a binding site for NADPH. 1-deoxy-D-xylulose 5-phosphate is bound by residues Ser-210, Asn-215, Lys-216, and Glu-219. Mn(2+) is bound at residue Glu-219.

It belongs to the DXR family. Mg(2+) is required as a cofactor. The cofactor is Mn(2+).

It carries out the reaction 2-C-methyl-D-erythritol 4-phosphate + NADP(+) = 1-deoxy-D-xylulose 5-phosphate + NADPH + H(+). It functions in the pathway isoprenoid biosynthesis; isopentenyl diphosphate biosynthesis via DXP pathway; isopentenyl diphosphate from 1-deoxy-D-xylulose 5-phosphate: step 1/6. Its function is as follows. Catalyzes the NADPH-dependent rearrangement and reduction of 1-deoxy-D-xylulose-5-phosphate (DXP) to 2-C-methyl-D-erythritol 4-phosphate (MEP). The polypeptide is 1-deoxy-D-xylulose 5-phosphate reductoisomerase (Porphyromonas gingivalis (strain ATCC 33277 / DSM 20709 / CIP 103683 / JCM 12257 / NCTC 11834 / 2561)).